The primary structure comprises 215 residues: Cytochrome c biogenesis ATP-binding export protein CcmA (215 aa).

One can recognise an ABC transporter domain in the interval 7-209; it reads LKIDRLACQR…ALTVLNLAQY (203 aa). An ATP-binding site is contributed by 39-46; that stretch reads GHNGIGKT.

The protein belongs to the ABC transporter superfamily. CcmA exporter (TC 3.A.1.107) family. The complex is composed of two ATP-binding proteins (CcmA) and two transmembrane proteins (CcmB).

The protein resides in the cell inner membrane. The enzyme catalyses heme b(in) + ATP + H2O = heme b(out) + ADP + phosphate + H(+). Its function is as follows. Part of the ABC transporter complex CcmAB involved in the biogenesis of c-type cytochromes; once thought to export heme, this seems not to be the case, but its exact role is uncertain. Responsible for energy coupling to the transport system. The sequence is that of Cytochrome c biogenesis ATP-binding export protein CcmA from Mannheimia succiniciproducens (strain KCTC 0769BP / MBEL55E).